We begin with the raw amino-acid sequence, 594 residues long: Probable acyl-CoA dehydrogenase (594 aa).

Catalysis depends on E405, which acts as the Proton acceptor.

This sequence belongs to the acyl-CoA dehydrogenase family. Requires FAD as cofactor.

The catalysed reaction is a 2,3-saturated acyl-CoA + A = a 2,3-dehydroacyl-CoA + AH2. It functions in the pathway lipid metabolism; fatty acid beta-oxidation. Functionally, involved in the degradation of long-chain fatty acids. This chain is Probable acyl-CoA dehydrogenase (fadE), found in Bacillus subtilis (strain 168).